The primary structure comprises 119 residues: uncharacterized protein (119 aa).

Helical transmembrane passes span 53 to 73 (AATI…SFLA) and 92 to 112 (FITH…WFLF).

The protein resides in the membrane. This is an uncharacterized protein from Saccharomyces cerevisiae (strain ATCC 204508 / S288c) (Baker's yeast).